The following is a 252-amino-acid chain: Aspartate/glutamate leucyltransferase (252 aa).

It belongs to the R-transferase family. Bpt subfamily.

Its subcellular location is the cytoplasm. It carries out the reaction N-terminal L-glutamyl-[protein] + L-leucyl-tRNA(Leu) = N-terminal L-leucyl-L-glutamyl-[protein] + tRNA(Leu) + H(+). It catalyses the reaction N-terminal L-aspartyl-[protein] + L-leucyl-tRNA(Leu) = N-terminal L-leucyl-L-aspartyl-[protein] + tRNA(Leu) + H(+). Its function is as follows. Functions in the N-end rule pathway of protein degradation where it conjugates Leu from its aminoacyl-tRNA to the N-termini of proteins containing an N-terminal aspartate or glutamate. The protein is Aspartate/glutamate leucyltransferase of Polynucleobacter necessarius subsp. necessarius (strain STIR1).